We begin with the raw amino-acid sequence, 21 residues long: Nitrilase (21 aa).

Belongs to the carbon-nitrogen hydrolase superfamily. Nitrilase family.

It carries out the reaction a nitrile + 2 H2O = a carboxylate + NH4(+). Its function is as follows. Acts on many kinds of nitrile compounds such as aliphatic, aromatic, and heterocyclic mononitriles or dinitriles. Prefers S-(-)-2-(4'-isobutylphenyl)-propionitrile to R-(+)-2-(4'-isobutylphenyl)-propionitrile as the substrate. The sequence is that of Nitrilase from Acinetobacter sp. (strain AK226).